A 368-amino-acid chain; its full sequence is Type 2 DNA topoisomerase 6 subunit A (368 aa).

A Topo IIA-type catalytic domain is found at 9 to 148 (PDTEEAREQL…FHMRPEESGA (140 aa)). Tyrosine 103 functions as the O-(5'-phospho-DNA)-tyrosine intermediate in the catalytic mechanism. Mg(2+) contacts are provided by glutamate 201 and aspartate 253.

Belongs to the TOP6A family. Homodimer. Heterotetramer of two Top6A and two Top6B chains. Mg(2+) is required as a cofactor.

The catalysed reaction is ATP-dependent breakage, passage and rejoining of double-stranded DNA.. Relaxes both positive and negative superturns and exhibits a strong decatenase activity. The chain is Type 2 DNA topoisomerase 6 subunit A from Haloarcula marismortui (strain ATCC 43049 / DSM 3752 / JCM 8966 / VKM B-1809) (Halobacterium marismortui).